The sequence spans 156 residues: Endogenous retrovirus group K member 104 Pro protein (156 aa).

A Peptidase A2 domain is found at 21–96 (FEGLVDTEAD…IPLNLWGQDL (76 aa)). The active site involves Asp-26. Residues 111-156 (YSPTSQKIMTKMGYIPGKGLGKNEDGIKVPVEAKINQKREGIGYPF) enclose the G-patch domain.

It belongs to the peptidase A2 family. HERV class-II K(HML-2) subfamily. As to quaternary structure, active as a homodimer. Autoproteolytically processed at the N-terminus. Expected C-terminal autoprocessing not detected. The sequence shown is that of the processed Pro protein.

It carries out the reaction Processing at the authentic HIV-1 PR recognition site and release of the mature p17 matrix and the p24 capsid protein, as a result of the cleavage of the -SQNY-|-PIVQ- cleavage site.. Functionally, retroviral proteases have roles in the processing of the primary translation products and the maturation of the viral particle. Endogenous Pro proteins may have kept, lost or modified their original function during evolution. This chain is Endogenous retrovirus group K member 104 Pro protein (HERV-K104), found in Homo sapiens (Human).